The sequence spans 31 residues: Cycloviolacin-O6 (31 aa).

Residues 1–31 (GTLPCGESCVWIPCISAAVGCSCKSKVCYKN) constitute a cross-link (cyclopeptide (Gly-Asn)). 3 disulfide bridges follow: cysteine 5/cysteine 21, cysteine 9/cysteine 23, and cysteine 14/cysteine 28.

Post-translationally, this is a cyclic peptide.

In terms of biological role, probably participates in a plant defense mechanism. This is Cycloviolacin-O6 from Viola odorata (Sweet violet).